An 86-amino-acid polypeptide reads, in one-letter code: Defensin-like protein 259 (86 aa).

Residues 1–25 (MKNASLKLPLLIFILVITSNLGAEA) form the signal peptide. Cystine bridges form between Cys-60/Cys-76, Cys-66/Cys-83, and Cys-70/Cys-85.

It belongs to the DEFL family.

The protein resides in the secreted. This is Defensin-like protein 259 from Arabidopsis thaliana (Mouse-ear cress).